Here is a 570-residue protein sequence, read N- to C-terminus: Sulfite reductase [NADPH] hemoprotein beta-component (570 aa).

[4Fe-4S] cluster-binding residues include C434, C440, C479, and C483. C483 is a binding site for siroheme.

This sequence belongs to the nitrite and sulfite reductase 4Fe-4S domain family. As to quaternary structure, alpha(8)-beta(8). The alpha component is a flavoprotein, the beta component is a hemoprotein. It depends on siroheme as a cofactor. The cofactor is [4Fe-4S] cluster.

It catalyses the reaction hydrogen sulfide + 3 NADP(+) + 3 H2O = sulfite + 3 NADPH + 4 H(+). Its pathway is sulfur metabolism; hydrogen sulfide biosynthesis; hydrogen sulfide from sulfite (NADPH route): step 1/1. In terms of biological role, component of the sulfite reductase complex that catalyzes the 6-electron reduction of sulfite to sulfide. This is one of several activities required for the biosynthesis of L-cysteine from sulfate. This chain is Sulfite reductase [NADPH] hemoprotein beta-component, found in Escherichia coli O9:H4 (strain HS).